The chain runs to 179 residues: MKQFLDFLPLVVFFAFYKIYDIYAATAALIVATAIVLIYSWVRFRKVEKMALITFVLVVVFGGLTLFFHNDEFIKWKVTVIYALFAGALLVSQWVMKKPLIQRMLGKELSLPQPVWSKLNLAWAVFFILCGLANIYIAFWLPQNIWVNFKVFGLTALTLIFTLLSGVYIYRHLPQDDKS.

5 helical membrane passes run 22–42, 50–70, 76–96, 121–141, and 149–169; these read IYAATAALIVATAIVLIYSWV, MALITFVLVVVFGGLTLFFHN, WKVTVIYALFAGALLVSQWVM, LAWAVFFILCGLANIYIAFWL, and FKVFGLTALTLIFTLLSGVYI.

It belongs to the YciB family.

Its subcellular location is the cell inner membrane. Functionally, plays a role in cell envelope biogenesis, maintenance of cell envelope integrity and membrane homeostasis. This Escherichia fergusonii (strain ATCC 35469 / DSM 13698 / CCUG 18766 / IAM 14443 / JCM 21226 / LMG 7866 / NBRC 102419 / NCTC 12128 / CDC 0568-73) protein is Inner membrane-spanning protein YciB.